The chain runs to 245 residues: 1-(5-phosphoribosyl)-5-[(5-phosphoribosylamino)methylideneamino] imidazole-4-carboxamide isomerase (245 aa).

Asp7 (proton acceptor) is an active-site residue. Asp129 acts as the Proton donor in catalysis.

The protein belongs to the HisA/HisF family.

It is found in the cytoplasm. The enzyme catalyses 1-(5-phospho-beta-D-ribosyl)-5-[(5-phospho-beta-D-ribosylamino)methylideneamino]imidazole-4-carboxamide = 5-[(5-phospho-1-deoxy-D-ribulos-1-ylimino)methylamino]-1-(5-phospho-beta-D-ribosyl)imidazole-4-carboxamide. It functions in the pathway amino-acid biosynthesis; L-histidine biosynthesis; L-histidine from 5-phospho-alpha-D-ribose 1-diphosphate: step 4/9. The chain is 1-(5-phosphoribosyl)-5-[(5-phosphoribosylamino)methylideneamino] imidazole-4-carboxamide isomerase from Escherichia coli (strain SMS-3-5 / SECEC).